A 1254-amino-acid chain; its full sequence is Unconventional myosin-VI (1254 aa).

Residues 2–53 (EDGKPVWAPHPTDGFQVGNIVDIGPDSLTIEPLNQKGKTFLALINQVFPAEE) enclose the Myosin N-terminal SH3-like domain. In terms of domain architecture, Myosin motor spans 57-772 (KDVEDNCSLM…KFAEFDQIMK (716 aa)). 151-158 (GESGAGKT) provides a ligand contact to ATP. Residue serine 267 is modified to Phosphoserine. The interval 273 to 317 (YLNRGCTRYFANKETDKQILQNRKSPEYLKAGSLKDPLLDDHGDF) is responsible for slow ATPase activity. A Phosphothreonine modification is found at threonine 406. Serine 605 is modified (phosphoserine). Residues 666-673 (FIRCIKPN) form an actin-binding region. The interval 783 to 811 (KRVNHWLICSRWKKVQWCSLSVIKLKNKI) is required for binding calmodulin. The region spanning 814-843 (RAEACIKMQKTIRMWLCKRRHKPRIDGLVK) is the IQ domain. The segment at 836–917 (PRIDGLVKVG…AVLLSALQKK (82 aa)) is three-helix bundle. The interval 918 to 985 (KQQEEEAERL…EDDEKRIQAE (68 aa)) is SAH. A disordered region spans residues 935–956 (EKERKRREEDEQRRRKEEEERR). Phosphoserine is present on serine 1026. The tract at residues 1037 to 1245 (RGPAVQATKA…ESRQARPTYA (209 aa)) is interaction with TAX1BP1 and CALCOCO2/NDP52. The interaction with OPTN stretch occupies residues 1085–1087 (RRL). The tract at residues 1096–1117 (KNKKRNTETEQRAPKSVTDYAQ) is disordered. An interaction with TOM1 region spans residues 1117-1245 (QQNPAVQLPA…ESRQARPTYA (129 aa)).

Belongs to the TRAFAC class myosin-kinesin ATPase superfamily. Myosin family. In terms of assembly, homodimer; dimerization seems to implicate the unfolding of the three-helix bundle region creating an additional calmodulin binding site, and cargo binding. Component of the DISP/DOCK7-induced septin displacement complex, at least composed of DOCK7, LRCH3 and MYO6. Able to function as a monomer under specific conditions in vitro. Forms a complex with CFTR and DAB2 in the apical membrane of epithelial cells. Binding to calmodulin through a unique insert, not found in other myosins, located in the neck region between the motor domain and the IQ domain appears to contribute to the directionality reversal. This interaction occurs only if the C-terminal lobe of calmodulin is occupied by calcium. Interaction with F-actin/ACTN1 occurs only at the apical brush border domain of the proximal tubule cells. Interacts with DAB2. In vitro, the C-terminal globular tail binds a C-terminal region of DAB2. Interacts with CFTR. Interacts with CABP5. Interacts (via residues 1117-1245) with TOM1 (via residues 392-463). Interacts (via residues 1060-1285) with OPTN. Interacts (via residues 1060-1285) with TAX1BP1 and CALCOCO2/NDP52. Interacts with TOM1L2. Interacts with CLIC5; may work together in a complex which also includes RDX and MYO6 to stabilize linkages between the plasma membrane and subjacent actin cytoskeleton at the base of stereocilia. Phosphorylation in the motor domain, induced by EGF, results in translocation of MYO6 from the cell surface to membrane ruffles and affects F-actin dynamics. Phosphorylated in vitro by p21-activated kinase (PAK). Expressed in all tissues examined including kidney cortex, intestinal mucosa, liver, lung, heart, jowl muscle, brain cortex and medulla, and in the epithelial cell line, LLC-PK1 (at protein level). In the kidney, located to the brush border of adult kidney proximal tubule cells.

Its subcellular location is the golgi apparatus. The protein localises to the trans-Golgi network membrane. The protein resides in the nucleus. It localises to the cytoplasm. It is found in the perinuclear region. Its subcellular location is the membrane. The protein localises to the clathrin-coated pit. The protein resides in the cytoplasmic vesicle. It localises to the clathrin-coated vesicle. It is found in the cell projection. Its subcellular location is the filopodium. The protein localises to the ruffle membrane. The protein resides in the microvillus. It localises to the cytosol. Its function is as follows. Myosins are actin-based motor molecules with ATPase activity. Unconventional myosins serve in intracellular movements. Myosin 6 is a reverse-direction motor protein that moves towards the minus-end of actin filaments. Has slow rate of actin-activated ADP release due to weak ATP binding. Functions in a variety of intracellular processes such as vesicular membrane trafficking and cell migration. Required for the structural integrity of the Golgi apparatus via the p53-dependent pro-survival pathway. Appears to be involved in a very early step of clathrin-mediated endocytosis in polarized epithelial cells. Together with TOM1, mediates delivery of endocytic cargo to autophagosomes thereby promoting autophagosome maturation and driving fusion with lysosomes. Links TOM1 with autophagy receptors, such as TAX1BP1; CALCOCO2/NDP52 and OPTN. May act as a regulator of F-actin dynamics. As part of the DISP complex, may regulate the association of septins with actin and thereby regulate the actin cytoskeleton. May play a role in transporting DAB2 from the plasma membrane to specific cellular targets. May play a role in the extension and network organization of neurites. Required for structural integrity of inner ear hair cells. Required for the correct localization of CLIC5 and RDX at the stereocilium base. Modulates RNA polymerase II-dependent transcription. This is Unconventional myosin-VI (MYO6) from Sus scrofa (Pig).